The sequence spans 194 residues: dCTP deaminase (194 aa).

DCTP contacts are provided by residues 110-115 (RSSLAR), D128, 136-138 (VLE), Y171, K178, and Q182. The Proton donor/acceptor role is filled by E138. Residues 169-194 (RPYNKRDNAKYKDQTSAVGSRISGEN) are disordered. Residues 170–181 (PYNKRDNAKYKD) are compositionally biased toward basic and acidic residues. Polar residues predominate over residues 182-194 (QTSAVGSRISGEN).

Belongs to the dCTP deaminase family. Homotrimer.

The enzyme catalyses dCTP + H2O + H(+) = dUTP + NH4(+). It functions in the pathway pyrimidine metabolism; dUMP biosynthesis; dUMP from dCTP (dUTP route): step 1/2. In terms of biological role, catalyzes the deamination of dCTP to dUTP. This is dCTP deaminase from Marinomonas sp. (strain MWYL1).